The chain runs to 104 residues: ATP-dependent Clp protease adapter protein ClpS (104 aa).

This sequence belongs to the ClpS family. Binds to the N-terminal domain of the chaperone ClpA.

Its function is as follows. Involved in the modulation of the specificity of the ClpAP-mediated ATP-dependent protein degradation. This is ATP-dependent Clp protease adapter protein ClpS from Oleidesulfovibrio alaskensis (strain ATCC BAA-1058 / DSM 17464 / G20) (Desulfovibrio alaskensis).